Here is a 284-residue protein sequence, read N- to C-terminus: ATP phosphoribosyltransferase (284 aa).

It belongs to the ATP phosphoribosyltransferase family. Long subfamily. In terms of assembly, equilibrium between an active dimeric form, an inactive hexameric form and higher aggregates. Interconversion between the various forms is largely reversible and is influenced by the natural substrates and inhibitors of the enzyme. It depends on Mg(2+) as a cofactor.

The protein localises to the cytoplasm. It catalyses the reaction 1-(5-phospho-beta-D-ribosyl)-ATP + diphosphate = 5-phospho-alpha-D-ribose 1-diphosphate + ATP. The protein operates within amino-acid biosynthesis; L-histidine biosynthesis; L-histidine from 5-phospho-alpha-D-ribose 1-diphosphate: step 1/9. Feedback inhibited by histidine. Functionally, catalyzes the condensation of ATP and 5-phosphoribose 1-diphosphate to form N'-(5'-phosphoribosyl)-ATP (PR-ATP). Has a crucial role in the pathway because the rate of histidine biosynthesis seems to be controlled primarily by regulation of HisG enzymatic activity. This is ATP phosphoribosyltransferase (hisG) from Mycobacterium bovis (strain ATCC BAA-935 / AF2122/97).